We begin with the raw amino-acid sequence, 545 residues long: MEINQPNLLEASKSCYSKITFFLLVISFAALVSTGFSSPELSLHHKICDQSVNKESCLAMISEVTGLNMADHRNLLKSFLEKTTPRIQKAFETANDASRRINNPQERTALLDCAELMDLSKERVVDSISILFHQNLTTRSHEDLHVWLSGVLTNHVTCLDGLEEGSTDYIKTLMESHLNELILRARTSLAIFVTLFPAKSNVIEPVTGNFPTWVTAGDRRLLQTLGKDIEPDIVVAKDGSGDYETLNEAVAAIPDNSKKRVIVLVRTGIYEENVDFGYQKKNVMLVGEGMDYTIITGSRNVVDGSTTFDSATVAAVGDGFIAQDICFQNTAGPEKYQAVALRIGADETVINRCRIDAYQDTLYPHNYRQFYRDRNITGTVDFIFGNAAVVFQNCNLIPRKQMKGQENTITAQGRTDPNQNTGTSIQNCEIFASADLEPVEDTFKSYLGRPWKEYSRTVVMESYISDVIDPAGWLEWDRDFALKTLFYGEYRNGGPGSGTSERVKWPGYHVITSPEVAEQFTVAELIQGGSWLGSTGVDYTAGLYA.

Residues 1-37 (MEINQPNLLEASKSCYSKITFFLLVISFAALVSTGFS) form the signal peptide. The segment at 38 to 191 (SPELSLHHKI…ILRARTSLAI (154 aa)) is pectinesterase inhibitor. Positions 38 to 228 (SPELSLHHKI…RRLLQTLGKD (191 aa)) are excised as a propeptide. The N-linked (GlcNAc...) asparagine glycan is linked to N135. The segment at 232–530 (DIVVAKDGSG…TVAELIQGGS (299 aa)) is pectinesterase. Substrate-binding residues include T307 and Q337. C326 and C353 are joined by a disulfide. The active-site Proton donor; for pectinesterase activity is the D360. N-linked (GlcNAc...) (complex) asparagine glycosylation occurs at N375. D381 serves as the catalytic Nucleophile; for pectinesterase activity. C394 and C428 form a disulfide bridge. Substrate contacts are provided by R449 and W451.

It in the N-terminal section; belongs to the PMEI family. This sequence in the C-terminal section; belongs to the pectinesterase family. Post-translationally, N-glycosylated.

It localises to the secreted. The protein localises to the cell wall. The enzyme catalyses [(1-&gt;4)-alpha-D-galacturonosyl methyl ester](n) + n H2O = [(1-&gt;4)-alpha-D-galacturonosyl](n) + n methanol + n H(+). Its pathway is glycan metabolism; pectin degradation; 2-dehydro-3-deoxy-D-gluconate from pectin: step 1/5. Acts in the modification of cell walls via demethylesterification of cell wall pectin. The protein is Pectinesterase/pectinesterase inhibitor of Ficus pumila var. awkeotsang (Jelly fig).